The following is a 264-amino-acid chain: Putative hydro-lyase Psyr_0498 (264 aa).

It belongs to the D-glutamate cyclase family.

The sequence is that of Putative hydro-lyase Psyr_0498 from Pseudomonas syringae pv. syringae (strain B728a).